Consider the following 200-residue polypeptide: Phospholipase A2 inhibitor CgMIP-I (200 aa).

The signal sequence occupies residues 1 to 19; sequence MKYLHTICLLFIFVARGNS. 7 disulfide bridges follow: Cys22–Cys46, Cys25–Cys32, Cys39–Cys67, Cys73–Cys94, Cys95–Cys100, Cys118–Cys143, and Cys136–Cys165. The N-linked (GlcNAc...) asparagine glycan is linked to Asn176.

The protein belongs to the CNF-like-inhibitor family. In terms of assembly, homomer of 110 kDa composed of 20-25-kDa subunits. N-glycosylated. The glycosidic chain may contain superficial sialic acid residues. In terms of tissue distribution, expressed by the liver.

Its subcellular location is the secreted. In terms of biological role, inhibits the enzymatic activity of basic phospholipase A2. Specifically neutralizes PLA2, myotoxic, edema-forming, cytolytic, and anti-coagulant activities, as well as intracerebral lethal effect of the basic myotoxin I from the same venom (AC P0DQP6), crotoxin heterodimer and crotoxin subunit B alone. Does not block the enzymatic activity of crude acidic PLA2 fractions from the same venom. The polypeptide is Phospholipase A2 inhibitor CgMIP-I (Cerrophidion godmani (Porthidium godmani)).